The sequence spans 257 residues: Putative hydro-lyase Bcenmc03_3969 (257 aa).

The protein belongs to the D-glutamate cyclase family.

This chain is Putative hydro-lyase Bcenmc03_3969, found in Burkholderia orbicola (strain MC0-3).